We begin with the raw amino-acid sequence, 487 residues long: UDP-glycosyltransferase 72E1 (487 aa).

The Proton acceptor role is filled by histidine 18. Histidine 18 provides a ligand contact to an anthocyanidin. Residue aspartate 116 is the Charge relay of the active site. Residues alanine 351, glutamine 353, histidine 368, tryptophan 371, asparagine 372, serine 373, and glutamate 376 each contribute to the UDP-alpha-D-glucose site. Position 391 (alanine 391) interacts with an anthocyanidin. Positions 392 and 393 each coordinate UDP-alpha-D-glucose.

The protein belongs to the UDP-glycosyltransferase family. As to quaternary structure, interacts with SIS8. In terms of tissue distribution, expressed in seedlings, roots and leaves.

The protein resides in the nucleus. It catalyses the reaction (E)-coniferaldehyde + UDP-alpha-D-glucose = 4-O-(beta-D-glucosyl)-4-(E)-coniferyl aldehyde + UDP + H(+). The enzyme catalyses (E)-sinapaldehyde + UDP-alpha-D-glucose = 4-O-(beta-D-glucosyl)-4-trans-sinapoyl aldehyde + UDP + H(+). Its function is as follows. UDP-glycosyltransferase that glucosylates coniferyl aldehyde to form coniferyl aldehyde 4-O-glucoside. Glucosylates sinapyl aldehyde to form sinapyl aldehyde 4-O-glucoside. Is not active in presence of coniferyl alcohol or sinapyl alcohol. Can glucosylate the phytotoxic xenobiotic compound 2,4,5-trichlorophenol (TCP). The protein is UDP-glycosyltransferase 72E1 of Arabidopsis thaliana (Mouse-ear cress).